The sequence spans 339 residues: RNA 3'-terminal phosphate cyclase (339 aa).

Residues Gln-103 and 283–287 (HLADQ) each bind ATP. Residue His-308 is the Tele-AMP-histidine intermediate of the active site.

This sequence belongs to the RNA 3'-terminal cyclase family. Type 1 subfamily.

It is found in the cytoplasm. The catalysed reaction is a 3'-end 3'-phospho-ribonucleotide-RNA + ATP = a 3'-end 2',3'-cyclophospho-ribonucleotide-RNA + AMP + diphosphate. In terms of biological role, catalyzes the conversion of 3'-phosphate to a 2',3'-cyclic phosphodiester at the end of RNA. The mechanism of action of the enzyme occurs in 3 steps: (A) adenylation of the enzyme by ATP; (B) transfer of adenylate to an RNA-N3'P to produce RNA-N3'PP5'A; (C) and attack of the adjacent 2'-hydroxyl on the 3'-phosphorus in the diester linkage to produce the cyclic end product. The biological role of this enzyme is unknown but it is likely to function in some aspects of cellular RNA processing. The chain is RNA 3'-terminal phosphate cyclase from Salmonella typhimurium (strain LT2 / SGSC1412 / ATCC 700720).